Reading from the N-terminus, the 445-residue chain is Enolase (445 aa).

2 residues coordinate substrate: histidine 165 and glutamate 174. The Proton donor role is filled by glutamate 217. Residues aspartate 252, glutamate 303, and aspartate 330 each coordinate Mg(2+). Positions 303 and 330 each coordinate substrate. The Proton acceptor role is filled by lysine 355. Residues 382–385 and lysine 406 contribute to the substrate site; that span reads SHRS.

It belongs to the enolase family. Homodimer. Mg(2+) serves as cofactor.

Its subcellular location is the cytoplasm. It carries out the reaction (2R)-2-phosphoglycerate = phosphoenolpyruvate + H2O. Its pathway is carbohydrate degradation; glycolysis; pyruvate from D-glyceraldehyde 3-phosphate: step 4/5. This Eimeria tenella (Coccidian parasite) protein is Enolase (ENO).